A 366-amino-acid chain; its full sequence is Quinolinate synthase (366 aa).

2 residues coordinate iminosuccinate: His44 and Ser61. Residue Cys108 participates in [4Fe-4S] cluster binding. Iminosuccinate contacts are provided by residues 139-141 (YIN) and Ser160. Cys228 serves as a coordination point for [4Fe-4S] cluster. Iminosuccinate is bound by residues 254-256 (HPE) and Thr271. Cys318 serves as a coordination point for [4Fe-4S] cluster.

The protein belongs to the quinolinate synthase family. Type 3 subfamily. [4Fe-4S] cluster serves as cofactor.

It is found in the cytoplasm. It carries out the reaction iminosuccinate + dihydroxyacetone phosphate = quinolinate + phosphate + 2 H2O + H(+). It participates in cofactor biosynthesis; NAD(+) biosynthesis; quinolinate from iminoaspartate: step 1/1. Catalyzes the condensation of iminoaspartate with dihydroxyacetone phosphate to form quinolinate. The sequence is that of Quinolinate synthase from Listeria monocytogenes serovar 1/2a (strain ATCC BAA-679 / EGD-e).